The sequence spans 468 residues: Peroxisome proliferator-activated receptor alpha (468 aa).

Positions 99 to 173 (NIECRICGDK…VGMSHNAIRF (75 aa)) form a DNA-binding region, nuclear receptor. 2 NR C4-type zinc fingers span residues 102 to 122 (CRIC…CEGC) and 139 to 161 (CDRS…FHKC). An NR LBD domain is found at 239–466 (FVIHDMETLC…HPLLQEIYRD (228 aa)). Residues S280, Y314, and Y464 each coordinate indeglitazar. The required for heterodimerization with RXRA stretch occupies residues 304 to 433 (DQVTLLKYGV…PKLLQKMADL (130 aa)).

Belongs to the nuclear hormone receptor family. NR1 subfamily. As to quaternary structure, heterodimer; with RXRA. This heterodimerization is required for DNA binding and transactivation activity. Interacts with NCOA3 coactivator. Interacts with CITED2; the interaction stimulates its transcriptional activity. Also interacts with PPARBP in vitro. Interacts with AKAP13, LPIN1, PRDM16 and coactivator NCOA6. Interacts with ASXL1 and ASXL2. Interacts with PER2. Interacts with SIRT1; the interaction seems to be modulated by NAD(+) levels. Interacts with CRY1 and CRY2. In hepatocytes, interacts with PAQR3 and HUWE1; the interactions promote PPARA poylubiquitination and HUWE1-mediated degradation. Ubiquitinated by E3 ubiquitin-protein ligase HUWE1; leading to proteasomal degradation. Post-translationally, phosphorylated. In terms of tissue distribution, skeletal muscle, liver, heart and kidney. Expressed in monocytes.

It is found in the nucleus. Its function is as follows. Ligand-activated transcription factor. Key regulator of lipid metabolism. Activated by the endogenous ligand 1-palmitoyl-2-oleoyl-sn-glycerol-3-phosphocholine (16:0/18:1-GPC). Activated by oleylethanolamide, a naturally occurring lipid that regulates satiety. Receptor for peroxisome proliferators such as hypolipidemic drugs and fatty acids. Regulates the peroxisomal beta-oxidation pathway of fatty acids. Functions as a transcription activator for the ACOX1 and P450 genes. Transactivation activity requires heterodimerization with RXRA and is antagonized by NR2C2. May be required for the propagation of clock information to metabolic pathways regulated by PER2. This chain is Peroxisome proliferator-activated receptor alpha (PPARA), found in Homo sapiens (Human).